The sequence spans 473 residues: Aspartyl/glutamyl-tRNA(Asn/Gln) amidotransferase subunit B (473 aa).

This sequence belongs to the GatB/GatE family. GatB subfamily. In terms of assembly, heterotrimer of A, B and C subunits.

It carries out the reaction L-glutamyl-tRNA(Gln) + L-glutamine + ATP + H2O = L-glutaminyl-tRNA(Gln) + L-glutamate + ADP + phosphate + H(+). The enzyme catalyses L-aspartyl-tRNA(Asn) + L-glutamine + ATP + H2O = L-asparaginyl-tRNA(Asn) + L-glutamate + ADP + phosphate + 2 H(+). In terms of biological role, allows the formation of correctly charged Asn-tRNA(Asn) or Gln-tRNA(Gln) through the transamidation of misacylated Asp-tRNA(Asn) or Glu-tRNA(Gln) in organisms which lack either or both of asparaginyl-tRNA or glutaminyl-tRNA synthetases. The reaction takes place in the presence of glutamine and ATP through an activated phospho-Asp-tRNA(Asn) or phospho-Glu-tRNA(Gln). The chain is Aspartyl/glutamyl-tRNA(Asn/Gln) amidotransferase subunit B from Levilactobacillus brevis (strain ATCC 367 / BCRC 12310 / CIP 105137 / JCM 1170 / LMG 11437 / NCIMB 947 / NCTC 947) (Lactobacillus brevis).